Here is a 137-residue protein sequence, read N- to C-terminus: Small ribosomal subunit protein uS12 (137 aa).

Disordered stretches follow at residues 1 to 21 and 36 to 57; these read MPTI…KSDS and TKLS…TPKK. A 3-methylthioaspartic acid modification is found at D102.

This sequence belongs to the universal ribosomal protein uS12 family. In terms of assembly, part of the 30S ribosomal subunit. Contacts proteins S8 and S17. May interact with IF1 in the 30S initiation complex.

With S4 and S5 plays an important role in translational accuracy. Its function is as follows. Interacts with and stabilizes bases of the 16S rRNA that are involved in tRNA selection in the A site and with the mRNA backbone. Located at the interface of the 30S and 50S subunits, it traverses the body of the 30S subunit contacting proteins on the other side and probably holding the rRNA structure together. The combined cluster of proteins S8, S12 and S17 appears to hold together the shoulder and platform of the 30S subunit. This Streptococcus agalactiae serotype Ia (strain ATCC 27591 / A909 / CDC SS700) protein is Small ribosomal subunit protein uS12.